A 1190-amino-acid polypeptide reads, in one-letter code: Tight junction protein 2 (1190 aa).

The residue at position 16 (Ser-16) is a Phosphoserine. A PDZ 1 domain is found at 33–120 (TVTLQKDSKR…VAAIVVKRPR (88 aa)). A phosphoserine mark is found at Ser-130, Ser-150, Ser-153, Ser-163, Ser-168, Ser-170, Ser-174, Ser-200, Ser-220, Ser-232, Ser-244, Ser-266, Ser-325, Ser-398, Ser-400, Ser-406, Ser-415, Ser-424, Ser-430, and Ser-431. The tract at residues 152–306 (RSGYSERSRL…PEPRGRPGPI (155 aa)) is disordered. Residues 169–291 (RSWEDSPERG…PRSRSREHPH (123 aa)) are compositionally biased toward basic and acidic residues. Residues 307–385 (GVLLMKSRAN…KLQLVVLRDS (79 aa)) enclose the PDZ 2 domain. The disordered stretch occupies residues 408–506 (IESNRSFSPE…RPSPEDEAIY (99 aa)). Over residues 415 to 446 (SPEERRHQYSDYDYHSSSEKLKERPSSREDTP) the composition is skewed to basic and acidic residues. Residue Thr-455 is modified to Phosphothreonine. Phosphoserine is present on Ser-499. One can recognise a PDZ 3 domain in the interval 509 to 590 (NTKMVRFKKG…GEMVTILAQS (82 aa)). Tyr-574 bears the Phosphotyrosine mark. Residues 604–669 (GDSFFIRSHF…PNKSRAEQMA (66 aa)) form the SH3 domain. The 199-residue stretch at 678–876 (NAGDRADFWR…WFGSLKDTIQ (199 aa)) folds into the Guanylate kinase-like domain. A phosphoserine mark is found at Ser-702 and Ser-902. Thr-905 is modified (phosphothreonine). Residues Ser-913 and Ser-920 each carry the phosphoserine modification. Disordered stretches follow at residues 920–1079 (SDFE…KSVL) and 1105–1190 (NARI…DTEL). Residues Thr-925 and Thr-933 each carry the phosphothreonine modification. A compositionally biased stretch (basic and acidic residues) spans 956–967 (VQHEESIRKPSP). 6 positions are modified to phosphoserine: Ser-966, Ser-978, Ser-986, Ser-1006, Ser-1067, and Ser-1068. Positions 994–1014 (EPPKAKTQNKEESYDFSKSYE) are enriched in basic and acidic residues. Residues 1060–1072 (EGEEVGESSEEQD) show a composition bias toward acidic residues. At Tyr-1118 the chain carries Phosphotyrosine. At Thr-1131 the chain carries Phosphothreonine. Phosphoserine is present on residues Ser-1147 and Ser-1159. The segment covering 1166–1175 (YRQQLSEHSK) has biased composition (basic and acidic residues). The interaction with SCRIB stretch occupies residues 1188-1190 (TEL).

This sequence belongs to the MAGUK family. As to quaternary structure, homodimer. Interacts (via PDZ2 domain) with TJP1/ZO1 (via PDZ2 domain). Interacts with OCLN. Interacts with UBN1. Interacts with SAFB in the nucleus. Interacts with SCRIB. Interacts with USP53 (via the C-terminal region). Interacts with claudins, including CLDN1, CLDN2, CLDN3, CLDN5 and CLDN7. Interacts with CLDN18. Interacts (via N-terminus) with CTNNA1. As to expression, this protein is found in epithelial cell junctions. Isoform A1 is abundant in the heart and brain. Detected in brain and skeletal muscle. It is present almost exclusively in normal tissues. Isoform C1 is expressed at high level in the kidney, pancreas, heart and placenta. Not detected in brain and skeletal muscle. Found in normal as well as in most neoplastic tissues.

It is found in the cell junction. Its subcellular location is the adherens junction. It localises to the cell membrane. The protein localises to the tight junction. The protein resides in the nucleus. Its function is as follows. Plays a role in tight junctions and adherens junctions. Acts as a positive regulator of RANKL-induced osteoclast differentiation, potentially via mediating downstream transcriptional activity. In Homo sapiens (Human), this protein is Tight junction protein 2.